Reading from the N-terminus, the 1019-residue chain is UPF0182 protein Krad_1193 (1019 aa).

The next 7 helical transmembrane spans lie at 19 to 39, 61 to 81, 115 to 135, 169 to 189, 213 to 233, 264 to 284, and 291 to 311; these read GAAL…VVGA, LWLQ…AVAV, RLVV…VAMS, WLAF…IAGL, VHLA…YWLD, AILA…AVGT, and IGTG…PWAV. Disordered stretches follow at residues 897–934 and 977–1019; these read GNSG…ATGD and DAAS…TPTP. The segment covering 977–1005 has biased composition (low complexity); the sequence is DAASAAEARLERSGTSGPTSSSSPSASSA. Residues 1006–1019 show a composition bias toward pro residues; the sequence is PPVPGETPAATPTP.

Belongs to the UPF0182 family.

The protein resides in the cell membrane. This chain is UPF0182 protein Krad_1193, found in Kineococcus radiotolerans (strain ATCC BAA-149 / DSM 14245 / SRS30216).